We begin with the raw amino-acid sequence, 916 residues long: Bifunctional aspartokinase/homoserine dehydrogenase 2, chloroplastic (916 aa).

A chloroplast-targeting transit peptide spans 1 to 87 (MATLKPSFTV…VDQVQIPKGE (87 aa)). The tract at residues 88–336 (MWSVHKFGGT…VNEAVILQTL (249 aa)) is aspartokinase. The interface stretch occupies residues 337–562 (SYQEAWEMSY…LSRTTLAMGI (226 aa)). ACT domains are found at residues 412-487 (VEGT…VIPN) and 493-570 (AVGQ…LIGA). The interval 563 to 916 (VGPGLIGATL…RLASYLGAPS (354 aa)) is homoserine dehydrogenase. NAD(+) is bound at residue I568. I568, K600, T649, and K673 together coordinate NADP(+). I568 serves as a coordination point for NADPH. T649 is an NAD(+) binding site. 2 residues coordinate NADPH: T649 and K673. Residues E700, V703, A705, and L707 each coordinate Na(+). NADP(+) contacts are provided by G758 and E761. Residues E761 and D772 each contribute to the L-homoserine site. The Proton donor role is filled by K776. An NAD(+)-binding site is contributed by G893. Position 893 (G893) interacts with NADP(+). Residue G893 participates in NADPH binding.

The protein in the N-terminal section; belongs to the aspartokinase family. This sequence in the C-terminal section; belongs to the homoserine dehydrogenase family. Homo- or heterodimer. It depends on a metal cation as a cofactor.

It localises to the plastid. It is found in the chloroplast. The enzyme catalyses L-homoserine + NADP(+) = L-aspartate 4-semialdehyde + NADPH + H(+). The catalysed reaction is L-homoserine + NAD(+) = L-aspartate 4-semialdehyde + NADH + H(+). It carries out the reaction L-aspartate + ATP = 4-phospho-L-aspartate + ADP. Its pathway is amino-acid biosynthesis; L-lysine biosynthesis via DAP pathway; (S)-tetrahydrodipicolinate from L-aspartate: step 1/4. The protein operates within amino-acid biosynthesis; L-methionine biosynthesis via de novo pathway; L-homoserine from L-aspartate: step 1/3. It participates in amino-acid biosynthesis; L-methionine biosynthesis via de novo pathway; L-homoserine from L-aspartate: step 3/3. It functions in the pathway amino-acid biosynthesis; L-threonine biosynthesis; L-threonine from L-aspartate: step 1/5. Its pathway is amino-acid biosynthesis; L-threonine biosynthesis; L-threonine from L-aspartate: step 3/5. Threonine interaction with Gln-443 leads to inhibition of aspartate kinase activity and facilitates the binding of a second threonine on Gln-524, leading to a partial inhibition of homoserine dehydrogenase activity (25% of activity remaining at saturation with threonine). Homoserine dehydrogenase activity is also partially inhibited by cysteine (15% of activity remaining at saturation with cysteine). No synergy between threonine and cysteine for the inhibition. 13-fold activation of aspartate kinase activity by cysteine, isoleucine, valine, serine and alanine at 2.5 mM and 4-fold activation by leucine at 2.5 mM, but no activation of homoserine dehydrogenase activity. In terms of biological role, bifunctional aspartate kinase and homoserine dehydrogenase that catalyzes the first and the third steps toward the synthesis of lysine, methionine and threonine from aspartate. This Arabidopsis thaliana (Mouse-ear cress) protein is Bifunctional aspartokinase/homoserine dehydrogenase 2, chloroplastic (AKHSDH2).